An 879-amino-acid polypeptide reads, in one-letter code: DNA methyltransferase A (879 aa).

The protein belongs to the methyltransferase superfamily.

It carries out the reaction a 2'-deoxyadenosine in DNA + S-adenosyl-L-methionine = an N(6)-methyl-2'-deoxyadenosine in DNA + S-adenosyl-L-homocysteine + H(+). Functionally, recognizes the double-stranded sequence 5'-GACGAG-3' and methylates A-5, yielding m6A. m6A methylation functions as a transcriptional modifier, promoting transcription of a number of genes (at least scpA, hbs, rnhC, yumC and zapA). One studied mechanism is via transcriptional repressor ScoC (also called hpr) which binds to non-methylated scpA promoter; when the m6A target is methylated ScoC no longer binds and scpA transcription is up-regulated. Other mechanisms for gene expression regulation probably exist. Binds DNA with and without the target sequence. Although it resembles a restriction-modification system, it does not have detectable endonuclease activity under tested conditions. A gamma subtype methylase. In Bacillus subtilis (strain 168), this protein is DNA methyltransferase A.